Here is a 452-residue protein sequence, read N- to C-terminus: tRNA-2-methylthio-N(6)-dimethylallyladenosine synthase (452 aa).

Residues 5 to 121 enclose the MTTase N-terminal domain; the sequence is RRYHITTFGC…LADLLAQVEA (117 aa). The [4Fe-4S] cluster site is built by Cys14, Cys50, Cys84, Cys156, Cys160, and Cys163. The Radical SAM core domain occupies 142 to 379; sequence RDSTITAWVN…NHLVAQMAAD (238 aa). The TRAM domain occupies 382–446; that stretch reads QRYLGRTEEV…AFSLTGQILS (65 aa).

Belongs to the methylthiotransferase family. MiaB subfamily. Monomer. The cofactor is [4Fe-4S] cluster.

The protein resides in the cytoplasm. The catalysed reaction is N(6)-dimethylallyladenosine(37) in tRNA + (sulfur carrier)-SH + AH2 + 2 S-adenosyl-L-methionine = 2-methylsulfanyl-N(6)-dimethylallyladenosine(37) in tRNA + (sulfur carrier)-H + 5'-deoxyadenosine + L-methionine + A + S-adenosyl-L-homocysteine + 2 H(+). Catalyzes the methylthiolation of N6-(dimethylallyl)adenosine (i(6)A), leading to the formation of 2-methylthio-N6-(dimethylallyl)adenosine (ms(2)i(6)A) at position 37 in tRNAs that read codons beginning with uridine. The polypeptide is tRNA-2-methylthio-N(6)-dimethylallyladenosine synthase (Synechococcus elongatus (strain ATCC 33912 / PCC 7942 / FACHB-805) (Anacystis nidulans R2)).